The primary structure comprises 250 residues: Keratin-associated protein 9-1 (250 aa).

A run of 32 repeats spans residues 8-12 (CCQPT), 13-17 (CCRTT), 18-22 (CCRTT), 37-41 (CCQPS), 42-46 (CCVPS), 51-55 (CCHPT), 56-60 (CCQNT), 61-65 (CCRTT), 66-70 (CCQPT), 75-79 (CCQPS), 80-84 (CCSTP), 85-89 (CCQPT), 90-94 (CCGSS), 95-99 (CCGQT), 105-109 (CCQPI), 114-117 (CCQP), 118-121 (CCHP), 133-137 (CCQPT), 138-142 (CCQPT), 143-147 (CCRNT), 153-157 (CCGSS), 162-166 (CCHPT), 167-171 (CCQTI), 176-180 (CCQPS), 185-189 (CCSTP), 190-194 (CCQPT), 214-218 (CCRPT), 219-223 (CCQTT), 229-233 (CCRPS), 234-238 (CCCSP), 239-243 (CCVSS), and 244-248 (CCQPS). The interval 8–248 (CCQPTCCRTT…CCVSSCCQPS (241 aa)) is 32 X 5 AA repeats of C-C-[CGSVRQH]-[SQTNP]-[PTSI].

Belongs to the KRTAP type 9 family. Interacts with hair keratins.

Functionally, in the hair cortex, hair keratin intermediate filaments are embedded in an interfilamentous matrix, consisting of hair keratin-associated proteins (KRTAP), which are essential for the formation of a rigid and resistant hair shaft through their extensive disulfide bond cross-linking with abundant cysteine residues of hair keratins. The matrix proteins include the high-sulfur and high-glycine-tyrosine keratins. In Homo sapiens (Human), this protein is Keratin-associated protein 9-1.